A 997-amino-acid polypeptide reads, in one-letter code: Pro-apoptotic serine protease NMA111 (997 aa).

Positions 1 to 43 (MTISLSNIKKRDHSKISDGTSGESSLVKRKQLESATGDQEEEY) are disordered. A serine protease region spans residues 83 to 273 (VVSIHFSQVA…LPLDRILRAL (191 aa)). Residues His-121, Asp-152, and Ser-235 each act as charge relay system in the active site. 2 consecutive PDZ domains span residues 300 to 378 (RRLG…QRGG) and 779 to 854 (EEWI…VRDG).

The protein belongs to the peptidase S1C family. As to quaternary structure, interacts with BIR1.

The protein localises to the nucleus. Functionally, nuclear serine protease which mediates apoptosis through proteolysis of the apoptotic inhibitor BIR1. This is Pro-apoptotic serine protease NMA111 (NMA111) from Saccharomyces cerevisiae (strain YJM789) (Baker's yeast).